The following is a 258-amino-acid chain: 5'-nucleotidase SurE (258 aa).

A divalent metal cation is bound by residues Asp-9, Asp-10, Ser-42, and Asn-96.

This sequence belongs to the SurE nucleotidase family. The cofactor is a divalent metal cation.

The protein resides in the cytoplasm. The catalysed reaction is a ribonucleoside 5'-phosphate + H2O = a ribonucleoside + phosphate. Functionally, nucleotidase that shows phosphatase activity on nucleoside 5'-monophosphates. The protein is 5'-nucleotidase SurE of Campylobacter jejuni subsp. jejuni serotype O:23/36 (strain 81-176).